The chain runs to 276 residues: Pantothenate synthetase (276 aa).

27 to 34 (MGALHKGH) lines the ATP pocket. H34 (proton donor) is an active-site residue. Q58 is a binding site for (R)-pantoate. Q58 contacts beta-alanine. 147–150 (GKKD) contributes to the ATP binding site. Q153 contacts (R)-pantoate. ATP contacts are provided by residues V176 and 184 to 187 (LSSR).

This sequence belongs to the pantothenate synthetase family. In terms of assembly, homodimer.

Its subcellular location is the cytoplasm. It carries out the reaction (R)-pantoate + beta-alanine + ATP = (R)-pantothenate + AMP + diphosphate + H(+). The protein operates within cofactor biosynthesis; (R)-pantothenate biosynthesis; (R)-pantothenate from (R)-pantoate and beta-alanine: step 1/1. Catalyzes the condensation of pantoate with beta-alanine in an ATP-dependent reaction via a pantoyl-adenylate intermediate. The chain is Pantothenate synthetase from Helicobacter pylori (strain Shi470).